Here is a 333-residue protein sequence, read N- to C-terminus: Fe(3+)-citrate import system permease protein YfmE (333 aa).

The next 8 helical transmembrane spans lie at 12 to 32 (LLAI…SIGI), 65 to 85 (IILA…LQGV), 95 to 115 (VVGI…IFPE), 120 to 140 (VLPF…LMIA), 194 to 214 (EVKL…ILIP), 238 to 258 (FILI…VGSI), 279 to 299 (YLLP…DTLG), and 306 to 326 (VEIP…LYLL).

This sequence belongs to the binding-protein-dependent transport system permease family. FecCD subfamily. In terms of assembly, the complex is composed of one ATP-binding protein (YfmF), two transmembrane proteins (YfmD and YfmE) and a solute-binding protein (YfmC).

It is found in the cell membrane. In terms of biological role, part of the ABC transporter complex YfmCDEF involved in citrate-dependent Fe(3+) import. Involved in the translocation of the substrate across the membrane. The chain is Fe(3+)-citrate import system permease protein YfmE (yfmE) from Bacillus subtilis (strain 168).